Consider the following 417-residue polypeptide: Histidine biosynthesis bifunctional protein his7 (417 aa).

The segment at 225 to 299 (GLVYSSKESV…HLDTLHCFGQ (75 aa)) is phosphoribosyl-AMP cyclohydrolase. Residues 303 to 387 (LCQLEKTLID…ISRHLDLKHR (85 aa)) form a phosphoribosyl-ATP pyrophosphohydrolase region.

It is found in the cytoplasm. It catalyses the reaction 1-(5-phospho-beta-D-ribosyl)-5'-AMP + H2O = 1-(5-phospho-beta-D-ribosyl)-5-[(5-phospho-beta-D-ribosylamino)methylideneamino]imidazole-4-carboxamide. The enzyme catalyses 1-(5-phospho-beta-D-ribosyl)-ATP + H2O = 1-(5-phospho-beta-D-ribosyl)-5'-AMP + diphosphate + H(+). It participates in amino-acid biosynthesis; L-histidine biosynthesis; L-histidine from 5-phospho-alpha-D-ribose 1-diphosphate: step 2/9. The protein operates within amino-acid biosynthesis; L-histidine biosynthesis; L-histidine from 5-phospho-alpha-D-ribose 1-diphosphate: step 3/9. This chain is Histidine biosynthesis bifunctional protein his7, found in Schizosaccharomyces pombe (strain 972 / ATCC 24843) (Fission yeast).